A 191-amino-acid polypeptide reads, in one-letter code: Probable GTP-binding protein EngB (191 aa).

One can recognise an EngB-type G domain in the interval 13–189 (DRLEVAFAGR…RAEIVALLPD (177 aa)). GTP-binding positions include 21–28 (GRSNVGKS), 48–52 (GRTRE), 67–70 (DLPG), 134–137 (TKTD), and 168–170 (TSS). Mg(2+) contacts are provided by Ser-28 and Thr-50.

This sequence belongs to the TRAFAC class TrmE-Era-EngA-EngB-Septin-like GTPase superfamily. EngB GTPase family. Mg(2+) serves as cofactor.

Its function is as follows. Necessary for normal cell division and for the maintenance of normal septation. The polypeptide is Probable GTP-binding protein EngB (Maricaulis maris (strain MCS10) (Caulobacter maris)).